The primary structure comprises 296 residues: 4-diphosphocytidyl-2-C-methyl-D-erythritol kinase (296 aa).

Lys12 is an active-site residue. 94–104 (PAQAGMGGGSS) contacts ATP. The active site involves Asp136.

Belongs to the GHMP kinase family. IspE subfamily.

It catalyses the reaction 4-CDP-2-C-methyl-D-erythritol + ATP = 4-CDP-2-C-methyl-D-erythritol 2-phosphate + ADP + H(+). The protein operates within isoprenoid biosynthesis; isopentenyl diphosphate biosynthesis via DXP pathway; isopentenyl diphosphate from 1-deoxy-D-xylulose 5-phosphate: step 3/6. Catalyzes the phosphorylation of the position 2 hydroxy group of 4-diphosphocytidyl-2C-methyl-D-erythritol. The sequence is that of 4-diphosphocytidyl-2-C-methyl-D-erythritol kinase from Variovorax paradoxus (strain S110).